The chain runs to 346 residues: D-alanine--D-alanine ligase (346 aa).

Residues 133–327 (KLYAKSVGVK…ALADQISLEK (195 aa)) enclose the ATP-grasp domain. 159–211 (LSFPCIIKPARLGSSIGISIVKDEKDLEYAKDVGFEFDNDLVVEEFKNNIKEY) serves as a coordination point for ATP. The Mg(2+) site is built by Asp284, Glu296, and Asn298.

This sequence belongs to the D-alanine--D-alanine ligase family. Mg(2+) serves as cofactor. Mn(2+) is required as a cofactor.

It is found in the cytoplasm. The catalysed reaction is 2 D-alanine + ATP = D-alanyl-D-alanine + ADP + phosphate + H(+). It participates in cell wall biogenesis; peptidoglycan biosynthesis. Functionally, cell wall formation. The protein is D-alanine--D-alanine ligase of Campylobacter jejuni subsp. jejuni serotype O:23/36 (strain 81-176).